Reading from the N-terminus, the 870-residue chain is Aldehyde-alcohol dehydrogenase 2 (870 aa).

The active site involves Cys252. 431 to 436 (GCGSYG) lines the NAD(+) pocket.

In the N-terminal section; belongs to the aldehyde dehydrogenase family. This sequence in the C-terminal section; belongs to the iron-containing alcohol dehydrogenase family. In terms of assembly, seems to form a rod shaped homomer composed of at least 20 identical subunits. It depends on Zn(2+) as a cofactor. The cofactor is Fe(2+).

It carries out the reaction a primary alcohol + NAD(+) = an aldehyde + NADH + H(+). The enzyme catalyses a secondary alcohol + NAD(+) = a ketone + NADH + H(+). The catalysed reaction is acetaldehyde + NAD(+) + CoA = acetyl-CoA + NADH + H(+). In terms of biological role, this enzyme has two NAD(+)-dependent activities: ADH and ACDH. May be a critical enzyme in the fermentative pathway. The protein is Aldehyde-alcohol dehydrogenase 2 (ADH2) of Entamoeba histolytica (strain ATCC 30459 / HM-1:IMSS / ABRM).